The sequence spans 355 residues: Spore germination protein XB (355 aa).

10 helical membrane-spanning segments follow: residues 2 to 24 (VNFF…VIII), 34 to 56 (DSWI…VFIV), 69 to 91 (LMRN…YLII), 106 to 128 (FYLP…FYNI), 135 to 157 (IALT…MIAN), 180 to 197 (GMIY…ILFL), 210 to 232 (LIIV…IVEF), 265 to 287 (VYQW…PDVL), 299 to 321 (ISIL…SFYW), and 326 to 348 (VFLP…FVWV).

Belongs to the amino acid-polyamine-organocation (APC) superfamily. Spore germination protein (SGP) (TC 2.A.3.9) family.

The protein localises to the cell membrane. May allow B.anthracis to germinate within phagocytic cells and therefore involved in virulence. The protein is Spore germination protein XB (gerXB) of Bacillus anthracis.